The following is a 459-amino-acid chain: Disease resistance protein CHL1 (459 aa).

The TIR domain occupies 16–170 (REVDVFLSFC…QIARDISLVV (155 aa)). Glutamate 89 is an active-site residue. An NB-ARC domain is found at 191–401 (VYDLLALEVN…LLKLKAKQGG (211 aa)). Residues 429–440 (ERKESSQDKSQQ) are compositionally biased toward basic and acidic residues. The tract at residues 429–459 (ERKESSQDKSQQESEVAADILIGKESSQDKQ) is disordered.

In terms of tissue distribution, mostly expressed in leaves, stems and roots, and, to a lower extent, in flowers and siliques.

It localises to the cytoplasm. The catalysed reaction is NAD(+) + H2O = ADP-D-ribose + nicotinamide + H(+). Its function is as follows. Confers resistance to low temperatures by limiting chloroplast damage and cell death, thus maintaining growth homeostasis. The sequence is that of Disease resistance protein CHL1 from Arabidopsis thaliana (Mouse-ear cress).